The sequence spans 123 residues: Small ribosomal subunit protein uS12 (123 aa).

Residue D89 is modified to 3-methylthioaspartic acid. A disordered region spans residues 104-123 (TQGVKDRRQRRSKYGAKRPK). Residues 110–123 (RRQRRSKYGAKRPK) are compositionally biased toward basic residues.

The protein belongs to the universal ribosomal protein uS12 family. As to quaternary structure, part of the 30S ribosomal subunit. Contacts proteins S8 and S17. May interact with IF1 in the 30S initiation complex.

With S4 and S5 plays an important role in translational accuracy. Functionally, interacts with and stabilizes bases of the 16S rRNA that are involved in tRNA selection in the A site and with the mRNA backbone. Located at the interface of the 30S and 50S subunits, it traverses the body of the 30S subunit contacting proteins on the other side and probably holding the rRNA structure together. The combined cluster of proteins S8, S12 and S17 appears to hold together the shoulder and platform of the 30S subunit. The chain is Small ribosomal subunit protein uS12 from Rhodospirillum rubrum (strain ATCC 11170 / ATH 1.1.1 / DSM 467 / LMG 4362 / NCIMB 8255 / S1).